The chain runs to 230 residues: E3 ubiquitin-protein ligase RNF114 (230 aa).

The RING-type zinc-finger motif lies at 31-70 (CPVCLEVYEKPVQVPCGHVFCSACLQECLKPKKPVCGVCR). Zn(2+) contacts are provided by Cys-93 and Cys-96. A C2HC RNF-type zinc finger spans residues 93-112 (CHGCRKNFFLSKIRAHVATC). The residue at position 104 (Lys-104) is an N6-acetyllysine. The Zn(2+) site is built by His-108 and Cys-112. Lys-114 carries the post-translational modification N6-acetyllysine.

Interacts with XAF1, the interaction increases XAF1 stability and proapoptotic effects, and may regulate IFN signaling. In terms of processing, autoubiquitinated. Polyubiquitinated in the presence of E2 enzymes UBE2D1, UBE2D2 and UBE2D3, but only monoubiquitinated in the presence of UBE2E1.

The protein localises to the cytoplasm. It localises to the nucleus. The catalysed reaction is S-ubiquitinyl-[E2 ubiquitin-conjugating enzyme]-L-cysteine + [acceptor protein]-L-lysine = [E2 ubiquitin-conjugating enzyme]-L-cysteine + N(6)-ubiquitinyl-[acceptor protein]-L-lysine.. The protein operates within protein modification; protein ubiquitination. E3 ubiquitin-protein ligase that promotes the ubiquitination of various substrates. In turn, participates in the regulation of many biological processes including cell cycle, apoptosis, osteoclastogenesis as well as innate or adaptive immunity. Acts as negative regulator of NF-kappa-B-dependent transcription by promoting the ubiquitination and stabilization of the NF-kappa-B inhibitor TNFAIP3. May promote the ubiquitination of TRAF6 as well. Also acts as a negative regulator of T-cell activation. Inhibits cellular dsRNA responses and interferon production by targeting MAVS component for proteasomal degradation. Ubiquitinates the CDK inhibitor CDKN1A leading to its degradationand probably also CDKN1B and CDKN1C. This activity stimulates cell cycle G1-to-S phase transition and suppresses cellular senescence. May play a role in spermatogenesis. The protein is E3 ubiquitin-protein ligase RNF114 (RNF114) of Bos taurus (Bovine).